Here is a 146-residue protein sequence, read N- to C-terminus: Globin (146 aa).

Ala1 is subject to N-acetylalanine. The Globin domain occupies 1–146; it reads ALTEPQKTAL…LLTMLIKAHS (146 aa). Heme b-binding residues include His65 and His97.

Belongs to the globin family. As to quaternary structure, homodimer.

This chain is Globin, found in Buccinum undatum (Common whelk).